We begin with the raw amino-acid sequence, 533 residues long: Calcineurin-interacting protein 3 (533 aa).

Disordered regions lie at residues 1 to 30 (MRSLKRENSGSALSVRSSDSEGDSYHNMDI), 53 to 85 (PRKQRSCHKRAEPVSEEHRKKESSKNSREYTKR), and 359 to 404 (MDMS…LTLP). The segment covering 61-85 (KRAEPVSEEHRKKESSKNSREYTKR) has biased composition (basic and acidic residues). Polar residues predominate over residues 359 to 372 (MDMSQTLSPEQTLS). The span at 373-384 (PREKLQVQDRKI) shows a compositional bias: basic and acidic residues.

The protein localises to the nucleus. The polypeptide is Calcineurin-interacting protein 3 (Caenorhabditis elegans).